We begin with the raw amino-acid sequence, 183 residues long: uncharacterized protein (183 aa).

The protein belongs to the asfivirus S183L family.

This is an uncharacterized protein from Ornithodoros (relapsing fever ticks).